Reading from the N-terminus, the 71-residue chain is UPF0346 protein SP70585_0986 (71 aa).

Belongs to the UPF0346 family.

This Streptococcus pneumoniae (strain 70585) protein is UPF0346 protein SP70585_0986.